The following is a 254-amino-acid chain: Imidazole glycerol phosphate synthase subunit HisF (254 aa).

Catalysis depends on residues D12 and D131.

Belongs to the HisA/HisF family. As to quaternary structure, heterodimer of HisH and HisF.

It is found in the cytoplasm. It carries out the reaction 5-[(5-phospho-1-deoxy-D-ribulos-1-ylimino)methylamino]-1-(5-phospho-beta-D-ribosyl)imidazole-4-carboxamide + L-glutamine = D-erythro-1-(imidazol-4-yl)glycerol 3-phosphate + 5-amino-1-(5-phospho-beta-D-ribosyl)imidazole-4-carboxamide + L-glutamate + H(+). It participates in amino-acid biosynthesis; L-histidine biosynthesis; L-histidine from 5-phospho-alpha-D-ribose 1-diphosphate: step 5/9. In terms of biological role, IGPS catalyzes the conversion of PRFAR and glutamine to IGP, AICAR and glutamate. The HisF subunit catalyzes the cyclization activity that produces IGP and AICAR from PRFAR using the ammonia provided by the HisH subunit. The protein is Imidazole glycerol phosphate synthase subunit HisF of Herminiimonas arsenicoxydans.